The primary structure comprises 125 residues: Dirigent protein 22 (125 aa).

N-linked (GlcNAc...) asparagine glycosylation is found at N8, N30, and N65.

It belongs to the plant dirigent protein family. In terms of assembly, homodimer.

The protein localises to the secreted. Its subcellular location is the extracellular space. It is found in the apoplast. In terms of biological role, dirigent proteins impart stereoselectivity on the phenoxy radical-coupling reaction, yielding optically active lignans from two molecules of coniferyl alcohol in the biosynthesis of lignans, flavonolignans, and alkaloids and thus plays a central role in plant secondary metabolism. This Arabidopsis thaliana (Mouse-ear cress) protein is Dirigent protein 22 (DIR22).